The sequence spans 187 residues: Ribosome maturation factor RimM (187 aa).

In terms of domain architecture, PRC barrel spans Glu-96–Gly-169.

Belongs to the RimM family. As to quaternary structure, binds ribosomal protein uS19.

The protein resides in the cytoplasm. Functionally, an accessory protein needed during the final step in the assembly of 30S ribosomal subunit, possibly for assembly of the head region. Essential for efficient processing of 16S rRNA. May be needed both before and after RbfA during the maturation of 16S rRNA. It has affinity for free ribosomal 30S subunits but not for 70S ribosomes. This is Ribosome maturation factor RimM from Rhizobium meliloti (strain 1021) (Ensifer meliloti).